A 355-amino-acid polypeptide reads, in one-letter code: 3-dehydroquinate synthase (355 aa).

NAD(+) is bound by residues 71-76, 105-109, 129-130, Lys-142, and Lys-151; these read EGEERK, GVVGD, and TS. 3 residues coordinate Zn(2+): Glu-184, His-246, and His-263.

This sequence belongs to the sugar phosphate cyclases superfamily. Dehydroquinate synthase family. Requires NAD(+) as cofactor. The cofactor is Co(2+). Zn(2+) is required as a cofactor.

Its subcellular location is the cytoplasm. It catalyses the reaction 7-phospho-2-dehydro-3-deoxy-D-arabino-heptonate = 3-dehydroquinate + phosphate. Its pathway is metabolic intermediate biosynthesis; chorismate biosynthesis; chorismate from D-erythrose 4-phosphate and phosphoenolpyruvate: step 2/7. In terms of biological role, catalyzes the conversion of 3-deoxy-D-arabino-heptulosonate 7-phosphate (DAHP) to dehydroquinate (DHQ). The polypeptide is 3-dehydroquinate synthase (Streptococcus pneumoniae serotype 4 (strain ATCC BAA-334 / TIGR4)).